A 490-amino-acid chain; its full sequence is Aspartyl/glutamyl-tRNA(Asn/Gln) amidotransferase subunit B (490 aa).

Belongs to the GatB/GatE family. GatB subfamily. Heterotrimer of A, B and C subunits.

The enzyme catalyses L-glutamyl-tRNA(Gln) + L-glutamine + ATP + H2O = L-glutaminyl-tRNA(Gln) + L-glutamate + ADP + phosphate + H(+). The catalysed reaction is L-aspartyl-tRNA(Asn) + L-glutamine + ATP + H2O = L-asparaginyl-tRNA(Asn) + L-glutamate + ADP + phosphate + 2 H(+). In terms of biological role, allows the formation of correctly charged Asn-tRNA(Asn) or Gln-tRNA(Gln) through the transamidation of misacylated Asp-tRNA(Asn) or Glu-tRNA(Gln) in organisms which lack either or both of asparaginyl-tRNA or glutaminyl-tRNA synthetases. The reaction takes place in the presence of glutamine and ATP through an activated phospho-Asp-tRNA(Asn) or phospho-Glu-tRNA(Gln). The protein is Aspartyl/glutamyl-tRNA(Asn/Gln) amidotransferase subunit B of Synechococcus sp. (strain JA-3-3Ab) (Cyanobacteria bacterium Yellowstone A-Prime).